Reading from the N-terminus, the 130-residue chain is Small ribosomal subunit protein uS11 (130 aa).

It belongs to the universal ribosomal protein uS11 family. As to quaternary structure, part of the 30S ribosomal subunit. Interacts with proteins S7 and S18. Binds to IF-3.

Located on the platform of the 30S subunit, it bridges several disparate RNA helices of the 16S rRNA. Forms part of the Shine-Dalgarno cleft in the 70S ribosome. This is Small ribosomal subunit protein uS11 from Synechococcus sp. (strain CC9605).